Reading from the N-terminus, the 792-residue chain is Probable exo-1,4-beta-xylosidase xlnD (792 aa).

The signal sequence occupies residues 1–20; the sequence is MSVAKSIAAVLVALLPGALA. Residues Asn-23, Asn-87, Asn-118, Asn-142, and Asn-246 are each glycosylated (N-linked (GlcNAc...) asparagine). Asp-310 is an active-site residue. N-linked (GlcNAc...) asparagine glycosylation is found at Asn-326, Asn-385, Asn-404, Asn-440, Asn-477, Asn-518, Asn-679, and Asn-701.

Belongs to the glycosyl hydrolase 3 family.

The protein localises to the secreted. It catalyses the reaction Hydrolysis of (1-&gt;4)-beta-D-xylans, to remove successive D-xylose residues from the non-reducing termini.. The protein operates within glycan degradation; xylan degradation. Its function is as follows. Xylan 1,4-beta-xylosidase involved in the hydrolysis of xylan, a major structural heterogeneous polysaccharide found in plant biomass representing the second most abundant polysaccharide in the biosphere, after cellulose. The protein is Probable exo-1,4-beta-xylosidase xlnD (xlnD) of Aspergillus fumigatus (strain CBS 144.89 / FGSC A1163 / CEA10) (Neosartorya fumigata).